Consider the following 141-residue polypeptide: Drosulfakinins (141 aa).

The first 33 residues, 1 to 33 (MGLRSCTHLATLFMTLWALAFCFLVVVPIPAQT), serve as a signal peptide directing secretion. Positions 34-73 (TSLQNAKDDRRLQELESKIGAESDQPNANLVGPSFSRFGD) are excised as a propeptide. The segment at 51-72 (KIGAESDQPNANLVGPSFSRFG) is disordered. Phe82 carries the post-translational modification Phenylalanine amide. Residues 86 to 111 (VPLISRPMIPIELDLLMDNDDERTKA) constitute a propeptide that is removed on maturation. Tyr117 bears the Sulfotyrosine mark. A Phenylalanine amide modification is found at Phe122. Tyr134 is subject to Sulfotyrosine. Position 139 is a phenylalanine amide (Phe139).

This sequence belongs to the gastrin/cholecystokinin family.

Its subcellular location is the secreted. Functionally, drosulfakinin-0 (DSK 0) plays diverse biological roles including regulating gut muscle contraction in adults but not in larvae. In Drosophila mauritiana (Fruit fly), this protein is Drosulfakinins.